A 352-amino-acid polypeptide reads, in one-letter code: MIETDKFSAPDRVISATPASSREEAFERALRPKLLDEYVGQEKVRGQLDIFMHAARNRREALDHVLLFGPPGLGKTTLAHIIAREMGVNLRQTSGPVLERPGDLAALLTNLEANDVLFIDEIHRLSPVVEEILYPALEDYQIDIMIGEGPAARSVKLDLQPFTLVGATTRAGMLTNPLRDRFGIVARLEFYTAEELARIVTRSAQLLGAHIDPLGSLEIARRARGTPRIANRLLRRVRDYAEVKGDGTITREIADAALAMLDVDRVGFDLMDRKLLEAVLHKFGGGPVGVDNLAAAIGEERDTIEDVLEPYLIQQGYLQRTPRGRVATAAAYRHFGLASPQAGDSGDLIDGE.

Residues 4–191 form a large ATPase domain (RuvB-L) region; the sequence is TDKFSAPDRV…FGIVARLEFY (188 aa). ATP is bound by residues leucine 30, arginine 31, glycine 72, lysine 75, threonine 76, threonine 77, 138–140, arginine 181, tyrosine 191, and arginine 228; that span reads EDY. Threonine 76 contributes to the Mg(2+) binding site. Residues 192–262 form a small ATPAse domain (RuvB-S) region; it reads TAEELARIVT…IADAALAMLD (71 aa). Positions 265–352 are head domain (RuvB-H); that stretch reads RVGFDLMDRK…GDSGDLIDGE (88 aa). Residues arginine 301, arginine 320, and arginine 325 each contribute to the DNA site.

The protein belongs to the RuvB family. As to quaternary structure, homohexamer. Forms an RuvA(8)-RuvB(12)-Holliday junction (HJ) complex. HJ DNA is sandwiched between 2 RuvA tetramers; dsDNA enters through RuvA and exits via RuvB. An RuvB hexamer assembles on each DNA strand where it exits the tetramer. Each RuvB hexamer is contacted by two RuvA subunits (via domain III) on 2 adjacent RuvB subunits; this complex drives branch migration. In the full resolvosome a probable DNA-RuvA(4)-RuvB(12)-RuvC(2) complex forms which resolves the HJ.

It is found in the cytoplasm. It carries out the reaction ATP + H2O = ADP + phosphate + H(+). Its function is as follows. The RuvA-RuvB-RuvC complex processes Holliday junction (HJ) DNA during genetic recombination and DNA repair, while the RuvA-RuvB complex plays an important role in the rescue of blocked DNA replication forks via replication fork reversal (RFR). RuvA specifically binds to HJ cruciform DNA, conferring on it an open structure. The RuvB hexamer acts as an ATP-dependent pump, pulling dsDNA into and through the RuvAB complex. RuvB forms 2 homohexamers on either side of HJ DNA bound by 1 or 2 RuvA tetramers; 4 subunits per hexamer contact DNA at a time. Coordinated motions by a converter formed by DNA-disengaged RuvB subunits stimulates ATP hydrolysis and nucleotide exchange. Immobilization of the converter enables RuvB to convert the ATP-contained energy into a lever motion, pulling 2 nucleotides of DNA out of the RuvA tetramer per ATP hydrolyzed, thus driving DNA branch migration. The RuvB motors rotate together with the DNA substrate, which together with the progressing nucleotide cycle form the mechanistic basis for DNA recombination by continuous HJ branch migration. Branch migration allows RuvC to scan DNA until it finds its consensus sequence, where it cleaves and resolves cruciform DNA. The sequence is that of Holliday junction branch migration complex subunit RuvB from Cupriavidus pinatubonensis (strain JMP 134 / LMG 1197) (Cupriavidus necator (strain JMP 134)).